Consider the following 383-residue polypeptide: ATP phosphoribosyltransferase regulatory subunit (383 aa).

This sequence belongs to the class-II aminoacyl-tRNA synthetase family. HisZ subfamily. In terms of assembly, heteromultimer composed of HisG and HisZ subunits.

It is found in the cytoplasm. The protein operates within amino-acid biosynthesis; L-histidine biosynthesis; L-histidine from 5-phospho-alpha-D-ribose 1-diphosphate: step 1/9. Required for the first step of histidine biosynthesis. May allow the feedback regulation of ATP phosphoribosyltransferase activity by histidine. This Desulfitobacterium hafniense (strain Y51) protein is ATP phosphoribosyltransferase regulatory subunit.